Here is a 511-residue protein sequence, read N- to C-terminus: MSVAILTSLPPQWLSILAVFLLPILTLLLFRGKDDNQKKGLKLPPGPRQLPLIGNLHQLGGQPYVDFWKMAKKYGPVMYLQLGRCPTVVLSSTETSKELMKDRDVECCSRPLSVGPGQLSYNFLDVAFSPYSDYWREMRKLFIFELLSMRRVQTFWYAREEQMDKMIEILDGAYPNPVNLTEKVFNMMDGIIGTIAFGRTTYAQQEFRDGFVKVLAATMDMLDNFHAENFFPVVGRFIDSLTGALAKRQRTFTDVDRYFEKVIEQHLDPNRPKPETEDIVDVLIGLMKDESTSFKITKDHVKAILMNVFVGGIDTSAVTITWAFSELLKNPKLMKKAQEEVRRAVGPNKRRVEGKEVEKIKYIDCIVKETFRKHPPVPLLVPHFSMKHCKIGGYDILPGTTIYVNAWAMGKDPTIWENPEEYNPDRFMNSEVDFRGSDFELVPFGAGRRICPGLAMGTTAVKYILSNLLYGWDYEMPRGKKFEDFPLIEEGGLTVHNKQDIMVIPKKHKWD.

Transmembrane regions (helical) follow at residues 10 to 30 (PPQWLSILAVFLLPILTLLLF) and 304 to 324 (ILMNVFVGGIDTSAVTITWAF). C451 contacts heme.

This sequence belongs to the cytochrome P450 family. Requires heme as cofactor. In terms of tissue distribution, expressed in storage roots, primary roots, petioles and vascular tissues. Expressed in the outer cortex cells, the endodermis and around the xylem, phloem cells and laticifers.

The protein localises to the microsome membrane. The enzyme catalyses (1E,2S)-2-methylbutanal oxime + reduced [NADPH--hemoprotein reductase] + O2 = 2-hydroxy-2-methylbutanenitrile + oxidized [NADPH--hemoprotein reductase] + 2 H2O + H(+). It catalyses the reaction (E)-2-methylpropanal oxime + reduced [NADPH--hemoprotein reductase] + O2 = 2-hydroxy-2-methylpropanenitrile + oxidized [NADPH--hemoprotein reductase] + 2 H2O + H(+). Its function is as follows. Catalyzes the conversion of (E)-2-methylpropanal oxime (valox) to 2-hydroxy-2-methylpropanenitrile (acetone cyanohydrin) and of (E)-2-methylbutanal oxime (ilox) to 2-hydroxy-2-methylbutyronitrile. The reaction takes place in three steps. First, the oxime is isomerized to the (Z)- isomer, next the (Z)-isomer is dehydrated to the corresponding nitrile, followed by a C-hydroxylation of the nitrile. Can use both aliphatic and aromatic oximes as substrates. The chain is 2-methylbutanal oxime monooxygenase (CYP71E7) from Manihot esculenta (Cassava).